A 372-amino-acid chain; its full sequence is Serine protease 44 (372 aa).

The N-terminal stretch at Met1–Ala25 is a signal peptide. Topologically, residues Arg26 to Lys351 are extracellular. A disordered region spans residues Thr31–Arg72. One can recognise a Peptidase S1 domain in the interval Ile112–Ser345. Cys137 and Cys153 are oxidised to a cystine. Catalysis depends on charge relay system residues His152 and Asp197. Asn208 is a glycosylation site (N-linked (GlcNAc...) asparagine). 3 cysteine pairs are disulfide-bonded: Cys231-Cys303, Cys262-Cys283, and Cys293-Cys321. Ser297 functions as the Charge relay system in the catalytic mechanism. Residues Leu352 to Leu372 form a helical membrane-spanning segment.

Belongs to the peptidase S1 family. In terms of tissue distribution, testis-specific. Expressed by primary and secondary spermatocytes.

It localises to the membrane. The protein localises to the cytoplasm. Its function is as follows. Lacks protease activity in vitro. This is Serine protease 44 from Mus musculus (Mouse).